A 254-amino-acid chain; its full sequence is Translation initiation factor 2 subunit alpha (254 aa).

An S1 motif domain is found at 10–81; the sequence is GDLVVVKITE…ERKNVDLSLK (72 aa).

Belongs to the eIF-2-alpha family. Heterotrimer composed of an alpha, a beta and a gamma chain.

Its function is as follows. eIF-2 functions in the early steps of protein synthesis by forming a ternary complex with GTP and initiator tRNA. The sequence is that of Translation initiation factor 2 subunit alpha from Thermoplasma volcanium (strain ATCC 51530 / DSM 4299 / JCM 9571 / NBRC 15438 / GSS1).